We begin with the raw amino-acid sequence, 61 residues long: Temporin-CG3 (61 aa).

An N-terminal signal peptide occupies residues 1–22 (MFTMKKPLLLLFFLATINLSLC). Residues 23–44 (EQERNAEEERRDEPDERNAEVE) constitute a propeptide, removed in mature form.

It belongs to the frog skin active peptide (FSAP) family. Temporin subfamily. As to expression, expressed by the skin glands.

It localises to the secreted. In terms of biological role, antimicrobial peptide active against a variety of Gram-positive bacterial strains but not against Gram-negative bacteria. Has weak antifungal activity against a slime mold isolate. Has weak hemolytic activity against human erythrocytes. The polypeptide is Temporin-CG3 (Amolops chunganensis (Chungan torrent frog)).